The following is a 466-amino-acid chain: Ribulose bisphosphate carboxylase large chain (466 aa).

Position 5 is an N6,N6,N6-trimethyllysine (Lys-5). Residues Asn-114 and Thr-164 each coordinate substrate. Lys-166 serves as the catalytic Proton acceptor. Lys-168 lines the substrate pocket. Residues Lys-192, Asp-194, and Glu-195 each coordinate Mg(2+). Residue Lys-192 is modified to N6-carboxylysine. His-285 functions as the Proton acceptor in the catalytic mechanism. The substrate site is built by Arg-286, His-318, and Ser-370.

Belongs to the RuBisCO large chain family. Type I subfamily. Heterohexadecamer of 8 large chains and 8 small chains; disulfide-linked. The disulfide link is formed within the large subunit homodimers. Mg(2+) serves as cofactor. The disulfide bond which can form in the large chain dimeric partners within the hexadecamer appears to be associated with oxidative stress and protein turnover.

The protein resides in the plastid. It localises to the chloroplast. It catalyses the reaction 2 (2R)-3-phosphoglycerate + 2 H(+) = D-ribulose 1,5-bisphosphate + CO2 + H2O. It carries out the reaction D-ribulose 1,5-bisphosphate + O2 = 2-phosphoglycolate + (2R)-3-phosphoglycerate + 2 H(+). RuBisCO catalyzes two reactions: the carboxylation of D-ribulose 1,5-bisphosphate, the primary event in carbon dioxide fixation, as well as the oxidative fragmentation of the pentose substrate in the photorespiration process. Both reactions occur simultaneously and in competition at the same active site. In Adoxa moschatellina (Moschatel), this protein is Ribulose bisphosphate carboxylase large chain.